The sequence spans 520 residues: GMP synthase [glutamine-hydrolyzing] (520 aa).

A Glutamine amidotransferase type-1 domain is found at 9–202; that stretch reads TVLIVDFGSQ…IHNIAGIKGD (194 aa). Cysteine 86 acts as the Nucleophile in catalysis. Active-site residues include histidine 176 and glutamate 178. The GMPS ATP-PPase domain occupies 203 to 395; sequence WSMSAYRAKA…LGLPDSFIGR (193 aa). 230 to 236 serves as a coordination point for ATP; sequence SGGVDSS.

Homodimer.

The enzyme catalyses XMP + L-glutamine + ATP + H2O = GMP + L-glutamate + AMP + diphosphate + 2 H(+). Its pathway is purine metabolism; GMP biosynthesis; GMP from XMP (L-Gln route): step 1/1. In terms of biological role, catalyzes the synthesis of GMP from XMP. The polypeptide is GMP synthase [glutamine-hydrolyzing] (Rhizobium rhizogenes (strain K84 / ATCC BAA-868) (Agrobacterium radiobacter)).